A 64-amino-acid chain; its full sequence is Bubble protein (64 aa).

4 disulfides stabilise this stretch: C3–C30, C18–C38, C28–C54, and C49–C64.

The protein resides in the secreted. May act as a toxin. May recognize a molecule or part of a molecule with a negatively charged surface potential. In Penicillium brevicompactum, this protein is Bubble protein.